A 282-amino-acid chain; its full sequence is Uracil-DNA glycosylase (282 aa).

Positions 15–40 (SAASKRKSASNTENIPEKVPAGNENQ) are disordered. Aspartate 123 acts as the Proton acceptor in catalysis.

Belongs to the uracil-DNA glycosylase (UDG) superfamily. UNG family.

The protein localises to the mitochondrion. The protein resides in the nucleus. The enzyme catalyses Hydrolyzes single-stranded DNA or mismatched double-stranded DNA and polynucleotides, releasing free uracil.. Its activity is regulated as follows. Inhibited by UGI, a B.subtilis bacteriophage PBS2 peptide inhibitor. Its function is as follows. Excises uracil residues from the DNA which can arise as a result of misincorporation of dUMP residues by DNA polymerase or due to deamination of cytosine. In Caenorhabditis elegans, this protein is Uracil-DNA glycosylase.